The primary structure comprises 272 residues: NH(3)-dependent NAD(+) synthetase (272 aa).

Tyr33 is a deamido-NAD(+) binding site. ATP-binding positions include 45-52 (GISGGQDS), Arg79, and Gln85. Asp51 contacts Mg(2+). Arg138 lines the deamido-NAD(+) pocket. Residue Thr158 coordinates ATP. Residue Glu163 coordinates Mg(2+). Lys171 and Asp178 together coordinate deamido-NAD(+). Residues Lys187 and Thr209 each coordinate ATP. Residues Glu224 and 258 to 259 (HK) contribute to the deamido-NAD(+) site.

Belongs to the NAD synthetase family. As to quaternary structure, homodimer. Post-translationally, phosphorylated during sporulation.

It catalyses the reaction deamido-NAD(+) + NH4(+) + ATP = AMP + diphosphate + NAD(+) + H(+). It functions in the pathway cofactor biosynthesis; NAD(+) biosynthesis; NAD(+) from deamido-NAD(+) (ammonia route): step 1/1. Catalyzes the ATP-dependent amidation of deamido-NAD to form NAD. Uses ammonia as a nitrogen source. The polypeptide is NH(3)-dependent NAD(+) synthetase (Bacillus subtilis (strain 168)).